Consider the following 110-residue polypeptide: Nucleotide-binding protein in fmt 3'region (110 aa).

8 to 15 (GLSGAGKT) provides a ligand contact to ATP. Residue 57–60 (DARA) coordinates GTP.

The protein belongs to the RapZ-like family.

Its function is as follows. Displays ATPase and GTPase activities. The protein is Nucleotide-binding protein in fmt 3'region of Thermus thermophilus.